We begin with the raw amino-acid sequence, 77 residues long: Metallothionein-like protein 2 (77 aa).

Belongs to the metallothionein superfamily. Type 15 family.

Metallothioneins have a high content of cysteine residues that bind various heavy metals. In Trifolium repens (Creeping white clover), this protein is Metallothionein-like protein 2 (MT1A).